The chain runs to 257 residues: NAD-capped RNA hydrolase NudC (257 aa).

Substrate is bound by residues Lys-25 and Arg-69. Zn(2+)-binding residues include Cys-98 and Cys-101. Residue Glu-111 participates in substrate binding. Positions 116 and 119 each coordinate Zn(2+). Tyr-124 lines the substrate pocket. The 124-residue stretch at 125 to 248 folds into the Nudix hydrolase domain; the sequence is PQIAPCIIVA…TVARRLIEDT (124 aa). A divalent metal cation is bound by residues Ala-158, Glu-174, and Glu-178. Positions 159 to 180 match the Nudix box motif; sequence GFVEVGETLEQAVAREVMEESG. 192–199 is a binding site for substrate; the sequence is QPWPFPQS. Glu-219 contributes to the a divalent metal cation binding site. A substrate-binding site is contributed by Ala-241.

This sequence belongs to the Nudix hydrolase family. NudC subfamily. In terms of assembly, homodimer. It depends on Mg(2+) as a cofactor. The cofactor is Mn(2+). Zn(2+) is required as a cofactor.

It carries out the reaction a 5'-end NAD(+)-phospho-ribonucleoside in mRNA + H2O = a 5'-end phospho-adenosine-phospho-ribonucleoside in mRNA + beta-nicotinamide D-ribonucleotide + 2 H(+). The catalysed reaction is NAD(+) + H2O = beta-nicotinamide D-ribonucleotide + AMP + 2 H(+). The enzyme catalyses NADH + H2O = reduced beta-nicotinamide D-ribonucleotide + AMP + 2 H(+). MRNA decapping enzyme that specifically removes the nicotinamide adenine dinucleotide (NAD) cap from a subset of mRNAs by hydrolyzing the diphosphate linkage to produce nicotinamide mononucleotide (NMN) and 5' monophosphate mRNA. The NAD-cap is present at the 5'-end of some mRNAs and stabilizes RNA against 5'-processing. Has preference for mRNAs with a 5'-end purine. Catalyzes the hydrolysis of a broad range of dinucleotide pyrophosphates. The polypeptide is NAD-capped RNA hydrolase NudC (Escherichia coli O45:K1 (strain S88 / ExPEC)).